The sequence spans 64 residues: Small ribosomal subunit protein bS21 (64 aa).

Residues 39-64 (EKPSVKRKKKALAAKKRAVKKARKSF) are disordered. Over residues 43–64 (VKRKKKALAAKKRAVKKARKSF) the composition is skewed to basic residues.

This sequence belongs to the bacterial ribosomal protein bS21 family.

This is Small ribosomal subunit protein bS21 (rpsU) from Myxococcus xanthus.